The primary structure comprises 59 residues: Chromatin protein Cren7 (59 aa).

Belongs to the Cren7 family. In terms of assembly, monomer. In terms of processing, methylated at multiple sites, to varying extents.

It localises to the chromosome. It is found in the cytoplasm. In terms of biological role, a chromatin protein, binds double-stranded DNA without sequence specificity. Constrains negative DNA supercoils. The protein is Chromatin protein Cren7 of Sulfolobus acidocaldarius (strain ATCC 33909 / DSM 639 / JCM 8929 / NBRC 15157 / NCIMB 11770).